A 105-amino-acid chain; its full sequence is Large ribosomal subunit protein uL24 (105 aa).

The tract at residues 75-105 (DSDGNPTRVGYRTDEESGKRVRISRKNGKDI) is disordered. The segment covering 94–105 (RVRISRKNGKDI) has biased composition (basic residues).

Belongs to the universal ribosomal protein uL24 family. Part of the 50S ribosomal subunit.

Functionally, one of two assembly initiator proteins, it binds directly to the 5'-end of the 23S rRNA, where it nucleates assembly of the 50S subunit. Its function is as follows. One of the proteins that surrounds the polypeptide exit tunnel on the outside of the subunit. This Rhodococcus jostii (strain RHA1) protein is Large ribosomal subunit protein uL24.